A 687-amino-acid polypeptide reads, in one-letter code: Protein-glutamine gamma-glutamyltransferase 2 (687 aa).

A2 is modified (N-acetylalanine). 2 disulfides stabilise this stretch: C230/C370 and C370/C371. Residues C277, H335, and D358 contribute to the active site. Ca(2+) is bound by residues N398, D400, E437, E447, and E452. The residue at position 468 (K468) is an N6-acetyllysine. Residue 476 to 483 participates in GTP binding; sequence RIRVGEGM. Position 539 (E539) interacts with Ca(2+). 580–583 provides a ligand contact to GTP; it reads RDIY. Q633 is covalently cross-linked (Isoglutamyl lysine isopeptide (Gln-Lys) (interchain with K-?)).

This sequence belongs to the transglutaminase superfamily. Transglutaminase family. In terms of assembly, monomer. Interacts with phospholipase C; promoting alpha-1 adrenergic receptor signaling. Interacts with PLCD1. Requires Ca(2+) as cofactor. In terms of processing, disulfide bond formation inactivates the calcium-dependent acyltransferase activity. Cys-370 can form disulfide bonds with both Cys-230 and Cys-371: formation of a disulfide bond between Cys-230 and Cys-370 facilitates formation of the disulfide between Cys-370 and Cys-371, which promotes inactivation of the acyltransferase activity. May also form interchain disulfids between Cys-230 and Cys-370. Ca(2+) protects against disulfide bond formation and inactivation. Post-translationally, auto-transglutaminated: Forms covalent cross-links mediated by transglutaminase between Gln-633 and the epsilon-amino group of a lysine residue of itself or HMGB1, forming homopolymers and heteropolymers, respectively. S-nitrosylated, leading to inactivation of the acyltransferase activity. As to expression, highest levels are detected in the lung. Lower levels are found in the liver, spleen and heart, but not in the brain.

It localises to the cytoplasm. Its subcellular location is the cytosol. The protein localises to the nucleus. The protein resides in the chromosome. It is found in the secreted. It localises to the extracellular space. Its subcellular location is the extracellular matrix. The protein localises to the cell membrane. The protein resides in the mitochondrion. The catalysed reaction is L-glutaminyl-[protein] + L-lysyl-[protein] = [protein]-L-lysyl-N(6)-5-L-glutamyl-[protein] + NH4(+). The enzyme catalyses L-glutaminyl-[protein] + serotonin = 5-serotonyl-L-glutamyl-[protein] + NH4(+). It catalyses the reaction L-glutaminyl-[protein] + dopamine = 5-dopaminyl-L-glutamyl-[protein] + NH4(+). It carries out the reaction L-glutaminyl-[protein] + histamine = 5-histaminyl-L-glutamyl-[protein] + NH4(+). The catalysed reaction is L-glutaminyl-[protein] + (R)-noradrenaline = 5-(R)-noradrenalinyl-L-glutamyl-[protein] + NH4(+). The enzyme catalyses L-glutaminyl-[protein] + H2O = L-glutamyl-[protein] + NH4(+). Acyltransferase activity is regulated by the binding of GTP and Ca(2+): inactivated by GTP, which stabilizes its closed structure, thereby obstructing the accessibility of substrates to the active sites. In contrast, Ca(2+) acts as a cofactor by inducing conformational change to the active open form. In absence of Ca(2+), Mg(2+) may bind Ca(2+)-binding sites, promoting GTP-binding and subsequent inhibition of the acyltransferase activity. Extracellularly reduced and activated by CLIC3. Its function is as follows. Calcium-dependent acyltransferase that catalyzes the formation of covalent bonds between peptide-bound glutamine and various primary amines, such as gamma-amino group of peptide-bound lysine, or mono- and polyamines, thereby producing cross-linked or aminated proteins, respectively. Involved in many biological processes, such as bone development, angiogenesis, wound healing, cellular differentiation, chromatin modification and apoptosis. Acts as a protein-glutamine gamma-glutamyltransferase by mediating the cross-linking of proteins, such as ACO2, HSPB6, FN1, HMGB1, RAP1GDS1, SLC25A4/ANT1, SPP1 and WDR54. Under physiological conditions, the protein cross-linking activity is inhibited by GTP; inhibition is relieved by Ca(2+) in response to various stresses. When secreted, catalyzes cross-linking of proteins of the extracellular matrix, such as FN1 and SPP1 resulting in the formation of scaffolds. Plays a key role during apoptosis, both by (1) promoting the cross-linking of cytoskeletal proteins resulting in condensation of the cytoplasm, and by (2) mediating cross-linking proteins of the extracellular matrix, resulting in the irreversible formation of scaffolds that stabilize the integrity of the dying cells before their clearance by phagocytosis, thereby preventing the leakage of harmful intracellular components. In addition to protein cross-linking, can use different monoamine substrates to catalyze a vast array of protein post-translational modifications: mediates aminylation of serotonin, dopamine, noradrenaline or histamine into glutamine residues of target proteins to generate protein serotonylation, dopaminylation, noradrenalinylation or histaminylation, respectively. Mediates protein serotonylation of small GTPases during activation and aggregation of platelets, leading to constitutive activation of these GTPases. Plays a key role in chromatin organization by mediating serotonylation and dopaminylation of histone H3. Catalyzes serotonylation of 'Gln-5' of histone H3 (H3Q5ser) during serotonergic neuron differentiation, thereby facilitating transcription. Acts as a mediator of neurotransmission-independent role of nuclear dopamine in ventral tegmental area (VTA) neurons: catalyzes dopaminylation of 'Gln-5' of histone H3 (H3Q5dop), thereby regulating relapse-related transcriptional plasticity in the reward system. Regulates vein remodeling by mediating serotonylation and subsequent inactivation of ATP2A2/SERCA2. Also acts as a protein deamidase by mediating the side chain deamidation of specific glutamine residues of proteins to glutamate. Catalyzes specific deamidation of protein gliadin, a component of wheat gluten in the diet. May also act as an isopeptidase cleaving the previously formed cross-links. Also able to participate in signaling pathways independently of its acyltransferase activity: acts as a signal transducer in alpha-1 adrenergic receptor-mediated stimulation of phospholipase C-delta (PLCD) activity and is required for coupling alpha-1 adrenergic agonists to the stimulation of phosphoinositide lipid metabolism. This is Protein-glutamine gamma-glutamyltransferase 2 from Bos taurus (Bovine).